A 99-amino-acid chain; its full sequence is Large ribosomal subunit protein uL23 (99 aa).

It belongs to the universal ribosomal protein uL23 family. Part of the 50S ribosomal subunit. Contacts protein L29, and trigger factor when it is bound to the ribosome.

One of the early assembly proteins it binds 23S rRNA. One of the proteins that surrounds the polypeptide exit tunnel on the outside of the ribosome. Forms the main docking site for trigger factor binding to the ribosome. This Pseudomonas fluorescens (strain SBW25) protein is Large ribosomal subunit protein uL23.